The following is a 106-amino-acid chain: MGKTNDWLDFEQLAEEKVRDALKPPSMYKVILVNDDYTPMEFVIDVLQKFFSYDVERATQLMLAVHYQGKAICGVFTAEVAETKVAMVNKYARENEHPLLCTLEKA.

Belongs to the ClpS family. Binds to the N-terminal domain of the chaperone ClpA.

Its function is as follows. Involved in the modulation of the specificity of the ClpAP-mediated ATP-dependent protein degradation. The sequence is that of ATP-dependent Clp protease adapter protein ClpS from Escherichia coli O127:H6 (strain E2348/69 / EPEC).